The sequence spans 84 residues: Large ribosomal subunit protein bL27 (84 aa).

The interval 1–21 (MATKKAGGSSRNGRDSAGRRL) is disordered.

This sequence belongs to the bacterial ribosomal protein bL27 family.

The protein is Large ribosomal subunit protein bL27 of Pelagibacter ubique (strain HTCC1062).